Reading from the N-terminus, the 261-residue chain is Carnitinyl-CoA dehydratase (261 aa).

Glutamate 111 functions as the Nucleophile in the catalytic mechanism. The active-site Proton acceptor is the glutamate 131.

It belongs to the enoyl-CoA hydratase/isomerase family.

It carries out the reaction (R)-carnitinyl-CoA = crotonobetainyl-CoA + H2O. Its pathway is amine and polyamine metabolism; carnitine metabolism. Its function is as follows. Catalyzes the reversible dehydration of L-carnitinyl-CoA to crotonobetainyl-CoA. The chain is Carnitinyl-CoA dehydratase from Salmonella typhi.